The chain runs to 756 residues: MLGICRGRRKFLAASLTVLFVPAVTWIYLFAGSFEDGKPVSLSPLESQPHSPRYTASSQRDRESLEVRMREVEEENRVLRKQLSLAQGRSPSHHRGNHSKTYSMEEGTGDSESLRAGIVAGNSSECGQQPAVEKCETIHVAIVCAGYNASRDVVTLVKSVLFHRRNPLHFHLIADAIAKQILATLFQTWMVPAVRIDFYDADELKSEVSWIPNKHYSGIYGLMKLVLTKTLPSNLERVIVLDTDITFATDIAELWAVFHKFKGQQVLGLVENQSDWYLGNLWKNHRPWPALGRGYNTGVILLLLDKLRKMKWEQMWRLTAERELMSMLSTSLADQDIFNAVIKQNPFLVYQLPCFWNVQLSDHTRSEQCYRDVSDLKVIHWNSPKKLRVKNKHVEFFRNLYLTFLEYDGNLLRRELFGCPSEADVNSENLQKQLSEPDEDDLCYEFRRERFTVHRTHLYFLHYEYEPASDNTDVTLVAQLSMDRLQMLEAICKHWEDPISLALYLSDAEAQQFLRYAQGSEVLMSRHNVGYHIVYKEGQFYPVNLLRNVAMKHISTPYMFLSDIDFLPMYGLYEYLRKSVTQLDLANTKKALIIPAFETLRYRLSFPKSKAELLSMLDMGTLFTFRYHVWTKGHAPTNFAKWRTATTPYRVEWEADFEPYVVVRKDCPEYDRRFVGFGWNKVAHIMELDAQEYEFTVLPNAYMIHMPHAPSFDITKFRSNKQYRICLKTLKEEFQQDMSRHYGFAALKYLTAENNS.

The Cytoplasmic segment spans residues 1–10; sequence MLGICRGRRK. Residues 11-31 form a helical; Signal-anchor for type II membrane protein membrane-spanning segment; it reads FLAASLTVLFVPAVTWIYLFA. Residues 32-756 are Lumenal-facing; that stretch reads GSFEDGKPVS…LKYLTAENNS (725 aa). 2 disordered regions span residues 42–63 and 81–109; these read LSPL…RDRE and KQLS…EGTG. The segment covering 44–58 has biased composition (polar residues); that stretch reads PLESQPHSPRYTASS. Residues 55–90 adopt a coiled-coil conformation; sequence TASSQRDRESLEVRMREVEEENRVLRKQLSLAQGRS. Residues asparagine 97, asparagine 122, and asparagine 148 are each glycosylated (N-linked (GlcNAc...) asparagine). Residues 138–413 form a xylosyltransferase activity region; sequence IHVAIVCAGY…FLEYDGNLLR (276 aa). 2 residues coordinate Mn(2+): aspartate 242 and aspartate 244. Asparagine 272 is a glycosylation site (N-linked (GlcNAc...) asparagine). Residues 414-756 are glucuronyltransferase activity; that stretch reads RELFGCPSEA…LKYLTAENNS (343 aa). Residues aspartate 563 and aspartate 565 each coordinate Mn(2+).

The protein in the C-terminal section; belongs to the glycosyltransferase 49 family. In the N-terminal section; belongs to the glycosyltransferase 8 family. The cofactor is Mn(2+).

It is found in the golgi apparatus membrane. The catalysed reaction is 3-O-[beta-D-GlcA-(1-&gt;3)-beta-D-Xyl-(1-&gt;4)-Rib-ol-P-Rib-ol-P-3-beta-D-GalNAc-(1-&gt;3)-beta-D-GlcNAc-(1-&gt;4)-(O-6-P-alpha-D-Man)]-Thr-[protein] + UDP-alpha-D-xylose = 3-O-[alpha-D-Xyl-(1-&gt;3)-beta-D-GlcA-(1-&gt;4)-beta-D-Xyl-(1-&gt;4)-Rib-ol-P-Rib-ol-P-3-beta-D-GalNAc-(1-&gt;3)-beta-D-GlcNAc-(1-&gt;4)-(O-6-P-alpha-D-Man)]-Thr-[protein] + UDP + H(+). It carries out the reaction 3-O-{(1-&gt;[3)-alpha-D-Xyl-(1-&gt;3)-beta-D-GlcA-(1-&gt;](n)-4)-beta-D-Xyl-(1-&gt;4)-Rib-ol-P-Rib-ol-P-3-beta-D-GalNAc-(1-&gt;3)-beta-D-GlcNAc-(1-&gt;4)-O-6-P-alpha-D-Man}-L-Thr-[protein] + UDP-alpha-D-glucuronate = 3-O-{beta-D-GlcA-(1-&gt;[3)-alpha-D-Xyl-(1-&gt;3)-beta-D-GlcA-(1-&gt;](n)-4)-beta-D-Xyl-(1-&gt;4)-Rib-ol-P-Rib-ol-P-3-beta-D-GalNAc-(1-&gt;3)-beta-D-GlcNAc-(1-&gt;4)-O-6-P-alpha-D-Man}-L-Thr-[protein] + UDP + H(+). The enzyme catalyses 3-O-{beta-D-GlcA-(1-&gt;[3)-alpha-D-Xyl-(1-&gt;3)-beta-D-GlcA-(1-&gt;](n)-4)-beta-D-Xyl-(1-&gt;4)-Rib-ol-P-Rib-ol-P-3-beta-D-GalNAc-(1-&gt;3)-beta-D-GlcNAc-(1-&gt;4)-O-6-P-alpha-D-Man}-L-Thr-[protein] + UDP-alpha-D-xylose = 3-O-{(1-&gt;[3)-alpha-D-Xyl-(1-&gt;3)-beta-D-GlcA-(1-&gt;](n+1)-4)-beta-D-Xyl-(1-&gt;4)-Rib-ol-P-Rib-ol-P-3-beta-D-GalNAc-(1-&gt;3)-beta-D-GlcNAc-(1-&gt;4)-O-6-P-alpha-D-Man}-L-Thr-[protein] + UDP + H(+). Its pathway is protein modification; protein glycosylation. Bifunctional glycosyltransferase with both alpha-1,3-xylosyltransferase and beta-1,3-glucuronyltransferase activities involved in the maturation of alpha-dystroglycan (DAG1) by glycosylation leading to DAG1 binding to laminin G-like domain-containing extracellular proteins with high affinity. Elongates the glucuronyl-beta-1,4-xylose-beta disaccharide primer structure initiated by B4GAT1 by adding repeating units [-3-Xylose-alpha-1,3-GlcA-beta-1-] to produce a heteropolysaccharide. Requires the phosphorylation of core M3 (O-mannosyl trisaccharide) by POMK to elongate the glucuronyl-beta-1,4-xylose-beta disaccharide primer. Plays a key role in skeletal muscle function and regeneration. The polypeptide is Xylosyl- and glucuronyltransferase LARGE1 (Gallus gallus (Chicken)).